A 677-amino-acid chain; its full sequence is Fermitin family homolog 1 (677 aa).

In terms of domain architecture, FERM spans 96–653 (MLRLRLPNAK…HEYIGGYIFL (558 aa)). The segment at 157–181 (KEPVIEDILNLESSSTSSGSPVSPG) is disordered. Residues 169–181 (SSSTSSGSPVSPG) show a composition bias toward low complexity. Phosphoserine is present on residues Ser170 and Ser179. The region spanning 377 to 473 (KLFRPKKLML…WMAACILASK (97 aa)) is the PH domain.

The protein belongs to the kindlin family. As to quaternary structure, interacts with the cytoplasmic domain of integrins ITGB1 and ITGB3.

Its subcellular location is the cytoplasm. It is found in the cytoskeleton. It localises to the cell junction. The protein localises to the focal adhesion. The protein resides in the cell projection. Its subcellular location is the ruffle membrane. In terms of biological role, involved in cell adhesion. Contributes to integrin activation. When coexpressed with talin, potentiates activation of ITGA2B. Required for normal keratinocyte proliferation. Required for normal polarization of basal keratinocytes in skin, and for normal cell shape. Required for normal adhesion of keratinocytes to fibronectin and laminin, and for normal keratinocyte migration to wound sites. This Mus musculus (Mouse) protein is Fermitin family homolog 1 (Fermt1).